The chain runs to 244 residues: tRNA pseudouridine synthase A (244 aa).

The active-site Nucleophile is Asp53. Tyr111 contributes to the substrate binding site.

Belongs to the tRNA pseudouridine synthase TruA family. Homodimer.

The catalysed reaction is uridine(38/39/40) in tRNA = pseudouridine(38/39/40) in tRNA. Functionally, formation of pseudouridine at positions 38, 39 and 40 in the anticodon stem and loop of transfer RNAs. This is tRNA pseudouridine synthase A from Bacillus sp. (strain KSM-64).